The chain runs to 132 residues: Small ribosomal subunit protein uS8 (132 aa).

This sequence belongs to the universal ribosomal protein uS8 family. Part of the 30S ribosomal subunit. Contacts proteins S5 and S12.

In terms of biological role, one of the primary rRNA binding proteins, it binds directly to 16S rRNA central domain where it helps coordinate assembly of the platform of the 30S subunit. The polypeptide is Small ribosomal subunit protein uS8 (Clostridium botulinum (strain Alaska E43 / Type E3)).